A 100-amino-acid chain; its full sequence is Putative pterin-4-alpha-carbinolamine dehydratase (100 aa).

The protein belongs to the pterin-4-alpha-carbinolamine dehydratase family.

It carries out the reaction (4aS,6R)-4a-hydroxy-L-erythro-5,6,7,8-tetrahydrobiopterin = (6R)-L-erythro-6,7-dihydrobiopterin + H2O. This is Putative pterin-4-alpha-carbinolamine dehydratase from Rhodopseudomonas palustris (strain ATCC BAA-98 / CGA009).